A 576-amino-acid chain; its full sequence is K(+)/H(+) antiporter NhaP2 (576 aa).

The next 13 membrane-spanning stretches (helical) occupy residues 6 to 26 (INSFFLIGALLTAVSVLLSPM), 34 to 54 (ILLIFLAVGILAGEDGPGGIL), 58 to 78 (YSTAYLVSNLALAIILLDGGM), 87 to 107 (VALWPALSLATFGVAITTSIT), 109 to 129 (MMAAWLFDLHWLQGLLVGAIV), 163 to 183 (PMAVFLTVTLIAILANVDTEM), 185 to 205 (FSFMFISFIKQFGLGICLGLG), 219 to 239 (LADGLYSILVLSGGLIIYAAS), 242 to 262 (LGGSGILSIYLVGLFLGNKPT), 271 to 291 (VLDGMTWVSQIGMFLVLGLLL), 299 to 319 (ILIPGFALAFGMILFARPVAV), 335 to 355 (WFISWVGLRGAVPIILAVFPM), and 359 to 379 (LPGAQLYFNLAFFVVLVSLLV). Residues 405–486 (SGVEIYPSSE…LEALSNLFSQ (82 aa)) form the RCK C-terminal domain.

This sequence belongs to the monovalent cation:proton antiporter 1 (CPA1) transporter (TC 2.A.36) family. NhaP2 subfamily.

The protein resides in the cell inner membrane. It catalyses the reaction K(+)(in) + H(+)(out) = K(+)(out) + H(+)(in). Its function is as follows. K(+)/H(+) antiporter that extrudes potassium in exchange for external protons and maintains the internal concentration of potassium under toxic levels. The protein is K(+)/H(+) antiporter NhaP2 of Shewanella baltica (strain OS155 / ATCC BAA-1091).